A 137-amino-acid polypeptide reads, in one-letter code: NADH-quinone oxidoreductase subunit A (137 aa).

Transmembrane regions (helical) follow at residues 12–32, 68–88, and 94–114; these read WAFA…LGVS, LVAM…AWAV, and GWVG…GLVY.

The protein belongs to the complex I subunit 3 family. As to quaternary structure, NDH-1 is composed of 13 different subunits. Subunits NuoA, H, J, K, L, M, N constitute the membrane sector of the complex.

Its subcellular location is the cell inner membrane. The catalysed reaction is a quinone + NADH + 5 H(+)(in) = a quinol + NAD(+) + 4 H(+)(out). NDH-1 shuttles electrons from NADH, via FMN and iron-sulfur (Fe-S) centers, to quinones in the respiratory chain. The immediate electron acceptor for the enzyme in this species is believed to be ubiquinone. Couples the redox reaction to proton translocation (for every two electrons transferred, four hydrogen ions are translocated across the cytoplasmic membrane), and thus conserves the redox energy in a proton gradient. The polypeptide is NADH-quinone oxidoreductase subunit A (Ectopseudomonas mendocina (strain ymp) (Pseudomonas mendocina)).